The following is a 121-amino-acid chain: Flagellar hook-basal body complex protein FliE (121 aa).

This sequence belongs to the FliE family.

It localises to the bacterial flagellum basal body. This Saccharophagus degradans (strain 2-40 / ATCC 43961 / DSM 17024) protein is Flagellar hook-basal body complex protein FliE.